Here is a 333-residue protein sequence, read N- to C-terminus: Dioxygenase cnsJ (333 aa).

Positions 153, 155, and 235 each coordinate Fe cation. The segment at 309 to 333 is disordered; that stretch reads NAQPEGEDDGGMKPNEGEHVVEAQI. The segment covering 323–333 has biased composition (basic and acidic residues); it reads NEGEHVVEAQI.

This sequence belongs to the PhyH family. As to quaternary structure, homodimer. The cofactor is Fe cation.

The protein operates within alkaloid biosynthesis. Its function is as follows. Dioxygenase; part of the gene cluster that mediates the biosynthesis of communesins, a prominent class of indole alkaloids with great potential as pharmaceuticals. Communesins are biosynthesized by the coupling of tryptamine and aurantioclavine, two building blocks derived from L-tryptophan. The L-tryptophan decarboxylase cnsB converts L-tryptophan to tryptamine, whereas the tryptophan dimethylallyltransferase cnsF converts L-tryptophan to 4-dimethylallyl tryptophan which is further transformed to aurantioclavine by the aurantioclavine synthase cnsA, probably aided by the catalase cnsD. The cytochrome P450 monooxygenase cnsC catalyzes the heterodimeric coupling between the two different indole moieties, tryptamine and aurantioclavine, to construct vicinal quaternary stereocenters and yield the heptacyclic communesin scaffold. The O-methyltransferase cnsE then methylates the communesin scaffold to produce communesin K, the simplest characterized communesin that contains the heptacyclic core. The dioxygenase cnsJ converts communesin K into communesin I. Acylation to introduce the hexadienyl group at position N16 of communesin I by the acyltransferase cnsK leads to the production of communesin B. The hexadienyl group is produced by the highly reducing polyketide synthase cnsI, before being hydrolytically removed from cnsI by the serine hydrolase cnsH, converted into hexadienyl-CoA by the CoA ligase cnsG, and then transferred to communesin I by cnsK. Surprisingly, cnsK may also be a promiscuous acyltransferase that can tolerate a range of acyl groups, including acetyl-, propionyl-, and butyryl-CoA, which lead to communesins A, G and H respectively. The roles of the alpha-ketoglutarate-dependent dioxygenases cnsM and cnsP have still to be determined. This Penicillium expansum (Blue mold rot fungus) protein is Dioxygenase cnsJ.